Here is a 444-residue protein sequence, read N- to C-terminus: Transcription activator AKTR-1 (444 aa).

The zn(2)-C6 fungal-type DNA-binding region spans 16–43 (CDFCTQSKLRCNKNKPSCRRCTIQQQPC). A disordered region spans residues 49–87 (RRTGRPPKHPRKANDCQEANGQHGEQDPVTSTPGGSCQQ). A compositionally biased stretch (basic residues) spans 50–59 (RTGRPPKHPR). Residues 76–87 (PVTSTPGGSCQQ) are compositionally biased toward polar residues.

The protein resides in the nucleus. Functionally, transcription factor that regulates the expression of the gene clusters that mediate the biosynthesis of the host-selective toxins (HSTs) AK-toxins responsible for Japanese pear black spot disease by the Japanese pear pathotype. AK-toxins are esters of 9,10-epoxy 8-hydroxy 9-methyldecatrienoic acid (EDA). On cellular level, AK-toxins affect plasma membrane of susceptible cells and cause a sudden increase in loss of K(+) after a few minutes of toxin treatment. This chain is Transcription activator AKTR-1, found in Alternaria alternata (Alternaria rot fungus).